The following is a 228-amino-acid chain: UPF0173 metal-dependent hydrolase lmo1577 (228 aa).

It belongs to the UPF0173 family.

In Listeria monocytogenes serovar 1/2a (strain ATCC BAA-679 / EGD-e), this protein is UPF0173 metal-dependent hydrolase lmo1577.